Here is a 325-residue protein sequence, read N- to C-terminus: Lactonase drp35 (325 aa).

Glu46, Thr108, Gly110, Asp128, Thr131, Tyr133, Asp136, Asn183, Asp234, and Ser235 together coordinate Ca(2+). Catalysis depends on Asp234, which acts as the Proton donor.

It belongs to the SMP-30/CGR1 family. It depends on Ca(2+) as a cofactor.

It is found in the cytoplasm. In terms of biological role, exhibits lactonase activity. Acts in cells with perturbed membrane integrity and is possibly related to the membrane homeostasis. The polypeptide is Lactonase drp35 (drp35) (Staphylococcus epidermidis (strain ATCC 35984 / DSM 28319 / BCRC 17069 / CCUG 31568 / BM 3577 / RP62A)).